The following is a 56-amino-acid chain: Bacteriocin sublancin-168 (56 aa).

A propeptide spanning residues 1-19 (MEKLFKEVKLEELENQKGS) is cleaved from the precursor. 2 disulfide bridges follow: cysteine 26/cysteine 55 and cysteine 33/cysteine 48. Cysteine 41 carries S-linked (Glc) cysteine; by host glycosylation.

In terms of assembly, monomer. Post-translationally, production of active sublancin-168 requires at least one thiol-disulfide oxidoreductase (BdbB or, in its absence, BdbC). Membrane translocation and cleavage of the precursor are probably performed by SunT.

Its subcellular location is the secreted. Its function is as follows. Bacteriocin active against Gram-positive bacteria. Inhibits B.cereus spore outgrowth, after the germination stage, approximately 1000-fold better than it inhibits exponential growth of the same cells. Inhibits B.subtilis strain ATCC 6633. The chain is Bacteriocin sublancin-168 (sunA) from Bacillus pumilus (Bacillus mesentericus).